A 78-amino-acid chain; its full sequence is Large ribosomal subunit protein bL31 (78 aa).

The protein belongs to the bacterial ribosomal protein bL31 family. Type A subfamily. As to quaternary structure, part of the 50S ribosomal subunit.

Binds the 23S rRNA. In Rickettsia prowazekii (strain Madrid E), this protein is Large ribosomal subunit protein bL31.